The chain runs to 392 residues: Heavy metal-associated isoprenylated plant protein 6 (392 aa).

Residues 1-19 (MGEKKEETATKPQGEKKPT) show a composition bias toward basic and acidic residues. The interval 1 to 22 (MGEKKEETATKPQGEKKPTDGG) is disordered. One can recognise an HMA 1 domain in the interval 23-86 (ITTVVMKLDM…KVADKIKRPV (64 aa)). Residues Cys-34 and Cys-37 each coordinate Cd(2+). A disordered region spans residues 89 to 157 (VSTVAPPKKE…PPPPKESTVV (69 aa)). Residues 106-145 (AEKKPSPAAEEKPAEKKPAAVEKPGEKKEEKKKEEGEKKA) show a composition bias toward basic and acidic residues. The HMA 2 domain occupies 153–216 (ESTVVLKTKL…YLNEKLKRTV (64 aa)). 2 residues coordinate Cd(2+): Cys-164 and Cys-167. The span at 258–270 (KKVDGGGEKKKEV) shows a compositional bias: basic and acidic residues. Disordered stretches follow at residues 258-285 (KKVD…GGDG) and 350-392 (GQGY…CSVM). Over residues 272 to 285 (VGGGGGGGGGGGDG) the composition is skewed to gly residues. A Cysteine methyl ester modification is found at Cys-389. The S-farnesyl cysteine moiety is linked to residue Cys-389. The propeptide at 390-392 (SVM) is removed in mature form.

Belongs to the HIPP family. In terms of tissue distribution, expressed in petioles, hypocotyls, peduncles, vascular bundles and root meristems.

The protein resides in the cell membrane. Its function is as follows. Heavy-metal-binding protein. Involved in the maintenance of heavy metal homeostasis and/or in detoxification. The sequence is that of Heavy metal-associated isoprenylated plant protein 6 from Arabidopsis thaliana (Mouse-ear cress).